The primary structure comprises 738 residues: 1,4-alpha-glucan branching enzyme GlgB (738 aa).

The active-site Nucleophile is D417. E472 acts as the Proton donor in catalysis.

It belongs to the glycosyl hydrolase 13 family. GlgB subfamily. In terms of assembly, monomer.

It carries out the reaction Transfers a segment of a (1-&gt;4)-alpha-D-glucan chain to a primary hydroxy group in a similar glucan chain.. It participates in glycan biosynthesis; glycogen biosynthesis. In terms of biological role, catalyzes the formation of the alpha-1,6-glucosidic linkages in glycogen by scission of a 1,4-alpha-linked oligosaccharide from growing alpha-1,4-glucan chains and the subsequent attachment of the oligosaccharide to the alpha-1,6 position. The sequence is that of 1,4-alpha-glucan branching enzyme GlgB from Burkholderia pseudomallei (strain 668).